Reading from the N-terminus, the 631-residue chain is Golgin subfamily A member 8A (631 aa).

The segment covering 1-20 has biased composition (basic and acidic residues); the sequence is MLPVDGEERKSEGSDTEGDR. Disordered regions lie at residues 1 to 103, 127 to 154, 426 to 447, and 488 to 520; these read MLPV…QEQA, KKQV…LEGQ, TSAE…ESSG, and PGDS…GAAG. The segment covering 78 to 92 has biased composition (low complexity); that stretch reads SLYLSPKSSSASSSL. The span at 93–103 shows a compositional bias: polar residues; that stretch reads HARQSPCQEQA. Residues 110–468 are a coiled coil; that stretch reads SIKISRLNDT…REHVEKLELG (359 aa). Over residues 128–152 the composition is skewed to basic and acidic residues; it reads KQVEHQLEEEKKANNEKQKAERELE. Over residues 497-510 the composition is skewed to gly residues; that stretch reads PGGGHHQAGPGQGG. Residues 519–631 are golgi-targeting domain; that stretch reads AGDGVAACGS…CWAWLPRRRR (113 aa).

It belongs to the GOLGA8 family.

The protein localises to the golgi apparatus. Its subcellular location is the golgi stack membrane. Its function is as follows. May be involved in maintaining Golgi structure. The sequence is that of Golgin subfamily A member 8A (GOLGA8A) from Homo sapiens (Human).